Here is a 315-residue protein sequence, read N- to C-terminus: Pantothenate synthetase (315 aa).

ATP is bound at residue 45-52 (MGALHEGH). His-52 functions as the Proton donor in the catalytic mechanism. Gln-77 is a binding site for (R)-pantoate. Position 77 (Gln-77) interacts with beta-alanine. 163–166 (GEKD) serves as a coordination point for ATP. Gln-169 serves as a coordination point for (R)-pantoate. ATP contacts are provided by residues Val-192 and 200–203 (MSSR).

Belongs to the pantothenate synthetase family. As to quaternary structure, homodimer.

The protein localises to the cytoplasm. The catalysed reaction is (R)-pantoate + beta-alanine + ATP = (R)-pantothenate + AMP + diphosphate + H(+). It functions in the pathway cofactor biosynthesis; (R)-pantothenate biosynthesis; (R)-pantothenate from (R)-pantoate and beta-alanine: step 1/1. Catalyzes the condensation of pantoate with beta-alanine in an ATP-dependent reaction via a pantoyl-adenylate intermediate. The sequence is that of Pantothenate synthetase from Mycobacterium ulcerans (strain Agy99).